Consider the following 86-residue polypeptide: YcgL domain-containing protein Smlt4554 (86 aa).

In terms of domain architecture, YcgL spans 1-85; it reads MHAYVYKSQL…SVASLMPRHY (85 aa).

The chain is YcgL domain-containing protein Smlt4554 from Stenotrophomonas maltophilia (strain K279a).